Reading from the N-terminus, the 98-residue chain is Defensin-like protein 219 (98 aa).

Residues 1-16 (MKTIFVFLTLAVLVSS) form the signal peptide. Cystine bridges form between Cys68–Cys85, Cys71–Cys90, and Cys75–Cys92.

It belongs to the DEFL family.

The protein resides in the secreted. The protein is Defensin-like protein 219 of Arabidopsis thaliana (Mouse-ear cress).